The primary structure comprises 284 residues: Diaminopimelate epimerase (284 aa).

Asn14 and Asn67 together coordinate substrate. The active-site Proton donor is Cys76. Substrate contacts are provided by residues 77–78, Asn166, Asn199, and 217–218; these read GN and ER. Cys226 acts as the Proton acceptor in catalysis. A substrate-binding site is contributed by 227-228; the sequence is GT.

The protein belongs to the diaminopimelate epimerase family. Homodimer.

The protein resides in the cytoplasm. It catalyses the reaction (2S,6S)-2,6-diaminopimelate = meso-2,6-diaminopimelate. The protein operates within amino-acid biosynthesis; L-lysine biosynthesis via DAP pathway; DL-2,6-diaminopimelate from LL-2,6-diaminopimelate: step 1/1. Catalyzes the stereoinversion of LL-2,6-diaminopimelate (L,L-DAP) to meso-diaminopimelate (meso-DAP), a precursor of L-lysine and an essential component of the bacterial peptidoglycan. The polypeptide is Diaminopimelate epimerase (Geobacillus sp. (strain WCH70)).